A 421-amino-acid polypeptide reads, in one-letter code: Outer capsid protein P8 (421 aa).

It belongs to the phytoreovirus outer capsid protein P8 family. Homotrimer. Homomultimer. Interacts with host peroxisomal glycolate oxidase (GOX). This interaction mediates its relocation to virus factories peripheral to host peroxisomes.

It localises to the virion. The protein resides in the host cytoplasm. Its function is as follows. Capsid protein which self-assembles to form the outer icosahedral capsid with a T=13 symmetry, about 70 nm in diameter and consisting of 780 molecules capsid proteins. The chain is Outer capsid protein P8 (S8) from Rice dwarf virus (isolate S) (RDV).